A 724-amino-acid polypeptide reads, in one-letter code: Acyl-coenzyme A oxidase 2 (724 aa).

Residues 1 to 48 (MAMLSQPNDGHDHPEKKDPDTTPKQVAGVISSQDPPHPAKDVAEERAR) are disordered. Basic and acidic residues-rich tracts occupy residues 9 to 21 (DGHDHPEKKDPDT) and 37 to 48 (HPAKDVAEERAR).

It belongs to the acyl-CoA oxidase family. FAD serves as cofactor.

It is found in the peroxisome. The enzyme catalyses a 2,3-saturated acyl-CoA + O2 = a (2E)-enoyl-CoA + H2O2. It participates in lipid metabolism; peroxisomal fatty acid beta-oxidation. This is Acyl-coenzyme A oxidase 2 (POX2) from Candida tropicalis (Yeast).